Consider the following 1073-residue polypeptide: Semaphorin-6D (1073 aa).

Positions 1 to 20 (MGFLLLWFCVLFLLVSRLRA) are cleaved as a signal peptide. Over 21–662 (VSFPEDDEPL…GESNQMVHMN (642 aa)) the chain is Extracellular. A Sema domain is found at 27–512 (DEPLNTVDYH…FSSCVVRIPL (486 aa)). Residue N51 is glycosylated (N-linked (GlcNAc...) asparagine). Disulfide bonds link C108-C118, C136-C145, C259-C370, and C284-C329. The N-linked (GlcNAc...) asparagine glycan is linked to N283. N435 and N461 each carry an N-linked (GlcNAc...) asparagine glycan. Intrachain disulfides connect C477-C506, C515-C533, C521-C568, and C525-C541. The 56-residue stretch at 514-569 (RCERYGSCKKSCIASRDPYCGWLSQGVCERVTLGMLPGGYEQDTEYGNTAHLGDCH) folds into the PSI domain. N631 carries an N-linked (GlcNAc...) asparagine glycan. Residues 663–683 (VLITCVFAAFVLGAFIAGVAV) form a helical membrane-spanning segment. At 684–1073 (YCYRDMFVRK…SVRPLNKYTY (390 aa)) the chain is on the cytoplasmic side. S723, S734, and S744 each carry phosphoserine. 4 disordered regions span residues 745–825 (RKEL…GHIP), 839–876 (TSFSNSNAHKAEKKLQSMDHPLTKSSSKREHRRSVDSR), 919–986 (PPKV…SPNG), and 1021–1073 (LQPS…KYTY). T773 bears the Phosphothreonine mark. Residues 790–806 (SHSEKAHSHGASRKEHP) are compositionally biased toward basic and acidic residues. Residues S931, S957, and S983 each carry the phosphoserine modification. A compositionally biased stretch (polar residues) spans 931-942 (SPPSTLPRNSPT). Polar residues-rich tracts occupy residues 1021–1037 (LQPSLSRQSSYTSNGTL) and 1059–1073 (VPQTTSVRPLNKYTY).

Belongs to the semaphorin family. In terms of tissue distribution, expressed in brain and lung.

Its subcellular location is the cell membrane. Its function is as follows. Shows growth cone collapsing activity on dorsal root ganglion (DRG) neurons in vitro. May be a stop signal for the DRG neurons in their target areas, and possibly also for other neurons. May also be involved in the maintenance and remodeling of neuronal connections. Ligand of TREM2 with PLXNA1 as coreceptor in dendritic cells, plays a role in the generation of immune responses and skeletal homeostasis. This Mus musculus (Mouse) protein is Semaphorin-6D (Sema6d).